A 172-amino-acid chain; its full sequence is NAD(P)H-quinone oxidoreductase subunit I, chloroplastic (172 aa).

2 4Fe-4S ferredoxin-type domains span residues 55–84 (GRIH…VDWK) and 95–124 (LNYS…MTEE). The [4Fe-4S] cluster site is built by Cys64, Cys67, Cys70, Cys74, Cys104, Cys107, Cys110, and Cys114.

This sequence belongs to the complex I 23 kDa subunit family. NDH is composed of at least 16 different subunits, 5 of which are encoded in the nucleus. [4Fe-4S] cluster serves as cofactor.

The protein localises to the plastid. Its subcellular location is the chloroplast thylakoid membrane. The catalysed reaction is a plastoquinone + NADH + (n+1) H(+)(in) = a plastoquinol + NAD(+) + n H(+)(out). It catalyses the reaction a plastoquinone + NADPH + (n+1) H(+)(in) = a plastoquinol + NADP(+) + n H(+)(out). NDH shuttles electrons from NAD(P)H:plastoquinone, via FMN and iron-sulfur (Fe-S) centers, to quinones in the photosynthetic chain and possibly in a chloroplast respiratory chain. The immediate electron acceptor for the enzyme in this species is believed to be plastoquinone. Couples the redox reaction to proton translocation, and thus conserves the redox energy in a proton gradient. This Crucihimalaya wallichii (Rock-cress) protein is NAD(P)H-quinone oxidoreductase subunit I, chloroplastic.